The sequence spans 184 residues: Outer-membrane lipoprotein carrier protein (184 aa).

An N-terminal signal peptide occupies residues 1-19 (MKAFLKILMVLIFVSVAYA).

This sequence belongs to the LolA family. As to quaternary structure, monomer.

Its subcellular location is the periplasm. Its function is as follows. Participates in the translocation of lipoproteins from the inner membrane to the outer membrane. Only forms a complex with a lipoprotein if the residue after the N-terminal Cys is not an aspartate (The Asp acts as a targeting signal to indicate that the lipoprotein should stay in the inner membrane). The polypeptide is Outer-membrane lipoprotein carrier protein (Helicobacter pylori (strain P12)).